A 138-amino-acid chain; its full sequence is Acidic phospholipase A2 VpaPLA2 (138 aa).

Positions 1-16 (MRTLWIVAVCLMGVEG) are cleaved as a signal peptide. 7 cysteine pairs are disulfide-bonded: C42–C131, C44–C60, C59–C111, C65–C138, C66–C104, C73–C97, and C91–C102. Y43, G45, and G47 together coordinate Ca(2+). H63 is a catalytic residue. D64 contacts Ca(2+). D105 is an active-site residue.

This sequence belongs to the phospholipase A2 family. Group II subfamily. D49 sub-subfamily. Requires Ca(2+) as cofactor. As to expression, expressed by the venom gland.

The protein resides in the secreted. The enzyme catalyses a 1,2-diacyl-sn-glycero-3-phosphocholine + H2O = a 1-acyl-sn-glycero-3-phosphocholine + a fatty acid + H(+). Its function is as follows. Snake venom phospholipase A2 (PLA2) that causes a sudden decrease of arterial blood pressure when injected into rat, but is not lethal. When co-injected with an uncharacterized basic protein (which did not show any enzymatic activity, but also causes a drop in blood pressure), this synergistical mixture is lethal. PLA2 catalyzes the calcium-dependent hydrolysis of the 2-acyl groups in 3-sn-phosphoglycerides. This is Acidic phospholipase A2 VpaPLA2 from Daboia palaestinae (Palestine viper).